We begin with the raw amino-acid sequence, 210 residues long: Outer-membrane lipoprotein carrier protein (210 aa).

An N-terminal signal peptide occupies residues 1 to 26 (MHMIRRAAGALAVFAVAALAAAPAWA).

It belongs to the LolA family. Monomer.

The protein localises to the periplasm. Its function is as follows. Participates in the translocation of lipoproteins from the inner membrane to the outer membrane. Only forms a complex with a lipoprotein if the residue after the N-terminal Cys is not an aspartate (The Asp acts as a targeting signal to indicate that the lipoprotein should stay in the inner membrane). This Bordetella bronchiseptica (strain ATCC BAA-588 / NCTC 13252 / RB50) (Alcaligenes bronchisepticus) protein is Outer-membrane lipoprotein carrier protein.